The primary structure comprises 858 residues: Elongation factor 2 (858 aa).

The 346-residue stretch at 17–362 folds into the tr-type G domain; that stretch reads ANIRNMSVIA…MITIHLPSPV (346 aa). A GTP-binding site is contributed by 26–33; the sequence is AHVDHGKS. Thr-54 is subject to Phosphothreonine. Thr-57 carries the phosphothreonine; by EEF2K modification. Thr-59 is modified (phosphothreonine). The residue at position 152 (Lys-152) is an N6-succinyllysine. Residues 158-161 and 216-218 each bind GTP; these read NKMD and SGL. Lys-235 carries the post-translational modification N6-acetyllysine. Lys-239 bears the N6-acetyllysine; alternate mark. Lys-239 participates in a covalent cross-link: Glycyl lysine isopeptide (Lys-Gly) (interchain with G-Cter in SUMO1); alternate. The residue at position 265 (Tyr-265) is a Phosphotyrosine; by CSK. Lys-272 is modified (N6-acetyllysine; alternate). An N6-succinyllysine; alternate modification is found at Lys-272. Lys-275 is subject to N6-acetyllysine. A Glycyl lysine isopeptide (Lys-Gly) (interchain with G-Cter in SUMO) cross-link involves residue Lys-322. Ser-325 is modified (phosphoserine). At Tyr-373 the chain carries Phosphotyrosine; by CSK. Residue Thr-435 is modified to Phosphothreonine. An N6-acetyllysine mark is found at Lys-439 and Lys-445. Ser-502 carries the post-translational modification Phosphoserine. At Lys-525 the chain carries N6,N6,N6-trimethyllysine; by EEF2KMT. Lys-529 is covalently cross-linked (Glycyl lysine isopeptide (Lys-Gly) (interchain with G-Cter in SUMO)). N6-succinyllysine is present on Lys-572. Ser-595 is modified (phosphoserine; by CDK2). Lys-619 carries the post-translational modification N6-acetyllysine. The residue at position 715 (His-715) is a Diphthamide.

It belongs to the TRAFAC class translation factor GTPase superfamily. Classic translation factor GTPase family. EF-G/EF-2 subfamily. As to quaternary structure, binds to 80S ribosomes. Actively translating ribosomes show mutually exclusive binding of eIF5a (EIF5A or EIF5A2) and EEF2/eEF2. Interacts with SERBP1; interaction sequesters EEF2/eEF2 at the A-site of the ribosome, thereby blocking the interaction sites of the mRNA-tRNA complex, promoting ribosome stabilization and hibernation. Interacts with HABP4; interaction takes place at the A-site of hibernating ribosomes and promotes ribosome stabilization. Component of the mRNA surveillance SURF complex, at least composed of ERF1, ERF3 (ERF3A or ERF3B), EEF2, UPF1/RENT1, SMG1, SMG8 and SMG9. Interacts with RBPMS2. Diphthamide is 2-[3-carboxyamido-3-(trimethyl-ammonio)propyl]histidine. Post-translationally, phosphorylation by EF-2 kinase completely inactivates EF-2; it requires prior phosphorylation by CDK2 at Ser-595 during mitotic prometaphase. Phosphorylation by CSK promotes SUMOylation, proteolytic cleavage, and nuclear translocation if the C-terminal fragment. In terms of processing, proteolytically processed at two sites following phosphorylation by CSK. SUMOylated following phosphorylation by CSK, promotes proteolytic cleavage. Post-translationally, ISGylated.

The protein localises to the cytoplasm. It is found in the nucleus. It carries out the reaction GTP + H2O = GDP + phosphate + H(+). Catalyzes the GTP-dependent ribosomal translocation step during translation elongation. During this step, the ribosome changes from the pre-translocational (PRE) to the post-translocational (POST) state as the newly formed A-site-bound peptidyl-tRNA and P-site-bound deacylated tRNA move to the P and E sites, respectively. Catalyzes the coordinated movement of the two tRNA molecules, the mRNA and conformational changes in the ribosome. The chain is Elongation factor 2 (Eef2) from Rattus norvegicus (Rat).